The chain runs to 308 residues: ADP-L-glycero-D-manno-heptose-6-epimerase (308 aa).

Residues 10 to 11 (MI), 31 to 32 (DN), Lys38, Lys53, 75 to 79 (EGACS), and Asn92 contribute to the NADP(+) site. Tyr139 functions as the Proton acceptor in the catalytic mechanism. Lys143 contributes to the NADP(+) binding site. Residue Asn168 coordinates substrate. Positions 169 and 177 each coordinate NADP(+). Residue Lys177 is the Proton acceptor of the active site. Substrate-binding positions include Ser179, His186, 200–203 (FAGS), Arg208, and Tyr271.

The protein belongs to the NAD(P)-dependent epimerase/dehydratase family. HldD subfamily. In terms of assembly, homopentamer. Requires NADP(+) as cofactor.

The enzyme catalyses ADP-D-glycero-beta-D-manno-heptose = ADP-L-glycero-beta-D-manno-heptose. It participates in nucleotide-sugar biosynthesis; ADP-L-glycero-beta-D-manno-heptose biosynthesis; ADP-L-glycero-beta-D-manno-heptose from D-glycero-beta-D-manno-heptose 7-phosphate: step 4/4. Functionally, catalyzes the interconversion between ADP-D-glycero-beta-D-manno-heptose and ADP-L-glycero-beta-D-manno-heptose via an epimerization at carbon 6 of the heptose. This chain is ADP-L-glycero-D-manno-heptose-6-epimerase, found in Mannheimia succiniciproducens (strain KCTC 0769BP / MBEL55E).